The primary structure comprises 342 residues: Phosphoribosylformylglycinamidine cyclo-ligase (342 aa).

This sequence belongs to the AIR synthase family.

It is found in the cytoplasm. The enzyme catalyses 2-formamido-N(1)-(5-O-phospho-beta-D-ribosyl)acetamidine + ATP = 5-amino-1-(5-phospho-beta-D-ribosyl)imidazole + ADP + phosphate + H(+). The protein operates within purine metabolism; IMP biosynthesis via de novo pathway; 5-amino-1-(5-phospho-D-ribosyl)imidazole from N(2)-formyl-N(1)-(5-phospho-D-ribosyl)glycinamide: step 2/2. The protein is Phosphoribosylformylglycinamidine cyclo-ligase of Gloeothece citriformis (strain PCC 7424) (Cyanothece sp. (strain PCC 7424)).